A 413-amino-acid polypeptide reads, in one-letter code: Alpha-1-antitrypsin 1-4 (413 aa).

Residues 1–24 (MTPSISWSLLLLAGLCCLVPSFLA) form the signal peptide. Asparagine 64, asparagine 101, and asparagine 265 each carry an N-linked (GlcNAc...) asparagine glycan. The interval 368-387 (AATVLQVATYSMPPIVRFDH) is RCL.

The protein belongs to the serpin family.

The protein localises to the secreted. In terms of biological role, inhibitor of serine proteases. Can inhibit trypsin and chymotrypsin; relatively ineffective against elastase. The sequence is that of Alpha-1-antitrypsin 1-4 (Serpina1d) from Mus musculus (Mouse).